The primary structure comprises 328 residues: uncharacterized protein (328 aa).

The tract at residues 296–328 (APEGDLEDEIIEVDPEQPRDDPYRRLRTPPPGG) is disordered. Positions 299–310 (GDLEDEIIEVDP) are enriched in acidic residues.

Possibly necessary for replication. This is an uncharacterized protein from Halobacterium sp. (strain GN101).